A 207-amino-acid chain; its full sequence is Sodium/potassium-transporting ATPase subunit beta-1-interacting protein 1 (207 aa).

The next 3 membrane-spanning stretches (helical) occupy residues 2 to 22, 35 to 55, and 62 to 82; these read GRCSGRCTLVGICCLQLAAAL, APILANFLHIMVVILGILGTL, and LILYSIWLALWVAWNAFIICF. Asn-100 is a glycosylation site (N-linked (GlcNAc...) asparagine). A helical transmembrane segment spans residues 147 to 167; that stretch reads ALSSALQIFLALFGFVYACYV.

This sequence belongs to the NKAIN family. Interacts with atp1b1 C-terminus.

Its subcellular location is the cell membrane. This is Sodium/potassium-transporting ATPase subunit beta-1-interacting protein 1 (nkain1) from Xenopus tropicalis (Western clawed frog).